The primary structure comprises 159 residues: MNIKIIGVGKLKEKYFKAGIAEYAKRLGRYCKFEIVEVPDEKAPESLSQAEMDEVMAKEGERILDKIKDREYVYALAIKGKERSSEEFAKEINKLTTYGHSDITFVIGGSLGLSPAVLKRADAQISFGRFTLPHQLMRLVLSEQIYRAFTIINGLPYHK.

The S-adenosyl-L-methionine site is built by leucine 76 and glycine 108.

It belongs to the RNA methyltransferase RlmH family. In terms of assembly, homodimer.

The protein localises to the cytoplasm. It catalyses the reaction pseudouridine(1915) in 23S rRNA + S-adenosyl-L-methionine = N(3)-methylpseudouridine(1915) in 23S rRNA + S-adenosyl-L-homocysteine + H(+). Its function is as follows. Specifically methylates the pseudouridine at position 1915 (m3Psi1915) in 23S rRNA. In Limosilactobacillus reuteri (strain DSM 20016) (Lactobacillus reuteri), this protein is Ribosomal RNA large subunit methyltransferase H.